A 344-amino-acid polypeptide reads, in one-letter code: Holliday junction branch migration complex subunit RuvB (344 aa).

Positions 4-194 (CLLRFCYNSL…FGITGHMEYY (191 aa)) are large ATPase domain (RuvB-L). ATP-binding positions include leucine 33, arginine 34, glycine 75, lysine 78, threonine 79, threonine 80, 141-143 (EDF), arginine 184, tyrosine 194, and arginine 231. Residue threonine 79 coordinates Mg(2+). The tract at residues 195 to 265 (TDIDLTEIVE…ITDKALTMLD (71 aa)) is small ATPAse domain (RuvB-S). Residues 268–344 (HEGLDYVDQK…YEHLGYRYTE (77 aa)) are head domain (RuvB-H). DNA is bound by residues arginine 304, arginine 323, arginine 325, and arginine 328.

The protein belongs to the RuvB family. Homohexamer. Forms an RuvA(8)-RuvB(12)-Holliday junction (HJ) complex. HJ DNA is sandwiched between 2 RuvA tetramers; dsDNA enters through RuvA and exits via RuvB. An RuvB hexamer assembles on each DNA strand where it exits the tetramer. Each RuvB hexamer is contacted by two RuvA subunits (via domain III) on 2 adjacent RuvB subunits; this complex drives branch migration. In the full resolvosome a probable DNA-RuvA(4)-RuvB(12)-RuvC(2) complex forms which resolves the HJ.

The protein localises to the cytoplasm. The catalysed reaction is ATP + H2O = ADP + phosphate + H(+). Its function is as follows. The RuvA-RuvB-RuvC complex processes Holliday junction (HJ) DNA during genetic recombination and DNA repair, while the RuvA-RuvB complex plays an important role in the rescue of blocked DNA replication forks via replication fork reversal (RFR). RuvA specifically binds to HJ cruciform DNA, conferring on it an open structure. The RuvB hexamer acts as an ATP-dependent pump, pulling dsDNA into and through the RuvAB complex. RuvB forms 2 homohexamers on either side of HJ DNA bound by 1 or 2 RuvA tetramers; 4 subunits per hexamer contact DNA at a time. Coordinated motions by a converter formed by DNA-disengaged RuvB subunits stimulates ATP hydrolysis and nucleotide exchange. Immobilization of the converter enables RuvB to convert the ATP-contained energy into a lever motion, pulling 2 nucleotides of DNA out of the RuvA tetramer per ATP hydrolyzed, thus driving DNA branch migration. The RuvB motors rotate together with the DNA substrate, which together with the progressing nucleotide cycle form the mechanistic basis for DNA recombination by continuous HJ branch migration. Branch migration allows RuvC to scan DNA until it finds its consensus sequence, where it cleaves and resolves cruciform DNA. This Streptococcus mutans serotype c (strain ATCC 700610 / UA159) protein is Holliday junction branch migration complex subunit RuvB.